A 203-amino-acid chain; its full sequence is Thymidylate kinase (203 aa).

10 to 17 serves as a coordination point for ATP; that stretch reads GIDGCGKT.

Belongs to the thymidylate kinase family.

It catalyses the reaction dTMP + ATP = dTDP + ADP. Its function is as follows. Phosphorylation of dTMP to form dTDP in both de novo and salvage pathways of dTTP synthesis. This chain is Thymidylate kinase, found in Thermoanaerobacter pseudethanolicus (strain ATCC 33223 / 39E) (Clostridium thermohydrosulfuricum).